A 362-amino-acid polypeptide reads, in one-letter code: tRNA-specific 2-thiouridylase MnmA 3 (362 aa).

Residues 11–18 (GMSGGIDS) and Met37 each bind ATP. Cys91 (nucleophile) is an active-site residue. Cys91 and Cys188 are oxidised to a cystine. Residue Gly115 coordinates ATP. Residues 137-139 (KDQ) form an interaction with tRNA region. Cys188 serves as the catalytic Cysteine persulfide intermediate. The interaction with tRNA stretch occupies residues 296 to 297 (RY).

It belongs to the MnmA/TRMU family.

It is found in the cytoplasm. It carries out the reaction S-sulfanyl-L-cysteinyl-[protein] + uridine(34) in tRNA + AH2 + ATP = 2-thiouridine(34) in tRNA + L-cysteinyl-[protein] + A + AMP + diphosphate + H(+). In terms of biological role, catalyzes the 2-thiolation of uridine at the wobble position (U34) of tRNA, leading to the formation of s(2)U34. The chain is tRNA-specific 2-thiouridylase MnmA 3 from Bacteroides fragilis (strain YCH46).